The primary structure comprises 343 residues: Methionine import ATP-binding protein MetN 1 (343 aa).

The 240-residue stretch at 2–241 folds into the ABC transporter domain; sequence IKLTHISKVF…PKTPLAQQFI (240 aa). An ATP-binding site is contributed by 38-45; it reads GASGAGKS.

Belongs to the ABC transporter superfamily. Methionine importer (TC 3.A.1.24) family. The complex is composed of two ATP-binding proteins (MetN), two transmembrane proteins (MetI) and a solute-binding protein (MetQ).

It is found in the cell inner membrane. It carries out the reaction L-methionine(out) + ATP + H2O = L-methionine(in) + ADP + phosphate + H(+). It catalyses the reaction D-methionine(out) + ATP + H2O = D-methionine(in) + ADP + phosphate + H(+). In terms of biological role, part of the ABC transporter complex MetNIQ involved in methionine import. Responsible for energy coupling to the transport system. This chain is Methionine import ATP-binding protein MetN 1, found in Yersinia pestis bv. Antiqua (strain Antiqua).